A 218-amino-acid chain; its full sequence is UPF0758 protein SAUSA300_1608 (218 aa).

Residues 92–214 (KITQPSDVAD…FTSLVEAGYF (123 aa)) form the MPN domain. The Zn(2+) site is built by His163, His165, and Asp176. The JAMM motif motif lies at 163 to 176 (HNHPSGDVTPSQED).

This sequence belongs to the UPF0758 family.

This is UPF0758 protein SAUSA300_1608 from Staphylococcus aureus (strain USA300).